We begin with the raw amino-acid sequence, 109 residues long: Phosphocarrier protein HPr (109 aa).

Positions 22–109 (ELSAVFTIRN…EVFNSGFGEL (88 aa)) constitute an HPr domain. The active-site Pros-phosphohistidine intermediate is His36.

The protein belongs to the HPr family.

The protein localises to the cytoplasm. Functionally, general (non sugar-specific) component of the phosphoenolpyruvate-dependent sugar phosphotransferase system (sugar PTS). This major carbohydrate active-transport system catalyzes the phosphorylation of incoming sugar substrates concomitantly with their translocation across the cell membrane. The phosphoryl group from phosphoenolpyruvate (PEP) is transferred to the phosphoryl carrier protein HPr by enzyme I. Phospho-HPr then transfers it to the PTS EIIA domain. The chain is Phosphocarrier protein HPr (ptsH) from Chlamydia trachomatis serovar D (strain ATCC VR-885 / DSM 19411 / UW-3/Cx).